The primary structure comprises 310 residues: D-erythrulose 1-phosphate 3-epimerase (310 aa).

It carries out the reaction D-erythrulose 1-phosphate = L-erythrulose 1-phosphate. Its pathway is carbohydrate metabolism; erythritol degradation. Catalyzes the racemization of D-erythrulose 1-phosphate to L-erythrulose 1-phosphate. This Brucella abortus (strain 2308) protein is D-erythrulose 1-phosphate 3-epimerase.